Here is a 996-residue protein sequence, read N- to C-terminus: MEAALLSGFIKAILPRLFSLVDDKHKLHKGVKGDIDFLIKELRMIVGAIDDDLSLDHPAAAAVQTLCMEDLRELAHGIEDCIDGVLYRAARDQQQSPVRRAVQAPKKLQRNLQLAQQLQRLKRMAAEANQRKQRYTAAAPGQHGQVYSSAAAQVDEPWPSCSSASDPRIHEADLVGVDADREELLEQLAERQPEQLKVIAIVGFCGLGKTALAAEAYNRETGGGRFERHAWVCAGHRSAREVLGELLRRLDADGRSFHGDSDAGQLCVDIRQQLEKNRYFIVIDDIQTEDQWKSIKSAFPTDKDIGSRIVVTTTIQSVANACCSANGYLHKMSRLDKNCSKQLLSKKACPERYSHYKQPDSAAILKKCDGQPLALVTIGEFLQANGWPTGPNCEDLCNRLHYHLENDKTLERMWRVLVRNYTSLPGHALKACLLYFGMFPSDHPIRRKSLLRRWLAEGFVEPLSSSSNIDSTAAFNVLMDRNIIEPINVSNNDKVKTCQTYGMMREFISHMSISQNFVTFFCDDKFVPKYVRRLSLHGDTVVNGDNFNGIDLSLVRSLAVFGEAGTTVLDFSKYQLLRVLDLEKCDDLKDDHLKEICNLVLLKYLSLGGNISKLPKDIAKLKDLEALDVRRSKVKIMPVEVFGLPCLIHLLGKFKLSDKVKQKTEVQEFLLKGKSNLQTLAGFASNGSEGFLHLMRYMNKLRKLKIWCTSSAGSTDWTDLREAIQQFILDEKEANIGTRSLSLHFSGCSEDAINSLKEPCYLSSLKLHGNFPQLPQFVTSLRGLKELCLSSTKFTTGLLEALSNLSYLQYLKLVADELEKFIIKVQGFPRLLRLCIVLQYPTFPVIEEGALPFLVTLQLLCKDLHGLSDIQIECFKHLQEVTLHSGVTPATRQEWVKAAKEHPNRPKVLLLKSVDTAESEHTDVDSVMEAVKSETTEYSIAPEGPEQVNNKMQLDHGLESSSVLNKQNNFADQSSSKDQLHYSFNNMGLSDVSCCE.

Residues 1–176 (MEAALLSGFI…PRIHEADLVG (176 aa)) are structured coiled coil (CC) domain. Positions 111–138 (NLQLAQQLQRLKRMAAEANQRKQRYTAA) form a coiled coil. The 283-residue stretch at 180 to 462 (DREELLEQLA…RWLAEGFVEP (283 aa)) folds into the NB-ARC domain. 11 LRR repeats span residues 481–503 (RNIIEPINVSNNDKVKTCQTYGM), 504–528 (MREFISHMSISQNFVTFFCDDKFVP), 529–549 (KYVRRLSLHGDTVVNGDNFNG), 577–599 (LRVLDLEKCDDLKDDHLKEICNL), 600–621 (VLLKYLSLGGNISKLPKDIAKL), 622–644 (KDLEALDVRRSKVKIMPVEVFGL), 698–722 (MNKLRKLKIWCTSSAGSTDWTDLRE), 759–781 (PCYLSSLKLHGNFPQLPQFVTSL), 782–804 (RGLKELCLSSTKFTTGLLEALSN), 805–830 (LSYLQYLKLVADELEKFIIKVQGFPR), and 851–874 (LPFLVTLQLLCKDLHGLSDIQIEC).

It belongs to the disease resistance NB-LRR family. As to quaternary structure, forms homodimer or heterodimer with RGA5 through its coiled coil (CC) domain. As to expression, expressed in leaves.

Its subcellular location is the cytoplasm. Functionally, disease resistance (R) protein. Resistance proteins guard the plant against pathogens that contain an appropriate avirulence protein via an indirect interaction with this avirulence protein. That triggers a defense system including the hypersensitive response, which restricts the pathogen growth. Contribution of RGA5 is required to recognize the effector avirulence proteins AVR-Pia and AVR1-CO39 from M.oryzae. Acts as a constitutively active cell death inducer that is repressed by RGA5. Immune response triggered by the RGA4-RGA5 -mediated recognition of AVR1-CO39 confers resistance to X.oryzae pathovars. This Oryza sativa subsp. japonica (Rice) protein is Disease resistance protein RGA4.